The sequence spans 415 residues: ATP-dependent Clp protease ATP-binding subunit ClpX (415 aa).

The region spanning 1–54 (MARNRMGGALICSFCNKPESSERFVVPGPGGIAICDRCVDLCESYIKSYKTVRP) is the ClpX-type ZB domain. Zn(2+) contacts are provided by C12, C15, C35, and C38. 117 to 124 (PTGSGKTL) is a binding site for ATP.

This sequence belongs to the ClpX chaperone family. Component of the ClpX-ClpP complex. Forms a hexameric ring that, in the presence of ATP, binds to fourteen ClpP subunits assembled into a disk-like structure with a central cavity, resembling the structure of eukaryotic proteasomes.

ATP-dependent specificity component of the Clp protease. It directs the protease to specific substrates. Can perform chaperone functions in the absence of ClpP. In Treponema denticola (strain ATCC 35405 / DSM 14222 / CIP 103919 / JCM 8153 / KCTC 15104), this protein is ATP-dependent Clp protease ATP-binding subunit ClpX.